The chain runs to 247 residues: Homeobox protein BarH-like 1b (247 aa).

Disordered regions lie at residues 118-138 (RGKL…GRRS) and 197-247 (GGGL…SQEE). A DNA-binding region (homeobox) is located at residues 135–194 (GRRSRTVFTELQLMGLEKRFEKQKYLSTPDRIDLAESLGLSQLQVKTWYQNRRMKWKKIV). The span at 223–234 (EQERARDAEKPP) shows a compositional bias: basic and acidic residues.

The protein belongs to the BAR homeobox family. Interacts with serum response factor (SRF). As to expression, expressed in smooth muscle cells of the upper digestive organs and their attached arteries and to craniofacial structures.

Its subcellular location is the nucleus. Transcription factor which is involved with the serum response factor (SRF) in the smooth muscle cell-specific transcription of the beta-tropomyosin gene in the upper digestive organs and their attached arteries. This is Homeobox protein BarH-like 1b (BARX1B) from Gallus gallus (Chicken).